A 502-amino-acid chain; its full sequence is Zinc finger C3HC-type protein 1 (502 aa).

Alanine 2 is subject to N-acetylalanine. At serine 24 the chain carries Phosphoserine. Threonine 28 is subject to Phosphothreonine. The tract at residues leucine 35–serine 74 is disordered. A compositionally biased stretch (polar residues) spans glutamine 50–serine 72. Phosphoserine occurs at positions 58 and 62. The residue at position 84 (threonine 84) is a Phosphothreonine. A C3HC-type zinc finger spans residues cysteine 102–cysteine 156. The disordered stretch occupies residues serine 302–serine 423. Residues serine 321 and serine 329 each carry the phosphoserine modification. Residue threonine 333 is modified to Phosphothreonine. 5 positions are modified to phosphoserine: serine 338, serine 344, serine 354, serine 359, and serine 370. Positions arginine 351–proline 360 are enriched in polar residues. Residues proline 371–arginine 380 show a composition bias toward low complexity. A Phosphoserine modification is found at serine 381. Phosphothreonine is present on threonine 384. A Phosphoserine modification is found at serine 395. Residues proline 396–arginine 402 carry the Nuclear localization signal motif. Serine 407 and serine 483 each carry phosphoserine. Positions serine 407–threonine 422 are enriched in low complexity.

As to quaternary structure, interacts with TPR; this interaction mediates ZC3HC1 nuclear envelopes (NE)-association but also required for proper positioning of a substantial amount of TPR at the nuclear basket (NB). Post-translationally, phosphorylated. May also be weakly phosphorylated on Tyr residues.

It localises to the nucleus. The protein localises to the nucleus envelope. In terms of biological role, required for proper positioning of a substantial amount of TPR at the nuclear basket (NB) through interaction with TPR. The chain is Zinc finger C3HC-type protein 1 (ZC3HC1) from Pongo abelii (Sumatran orangutan).